A 293-amino-acid polypeptide reads, in one-letter code: ATP synthase gamma chain (293 aa).

The protein belongs to the ATPase gamma chain family. As to quaternary structure, F-type ATPases have 2 components, CF(1) - the catalytic core - and CF(0) - the membrane proton channel. CF(1) has five subunits: alpha(3), beta(3), gamma(1), delta(1), epsilon(1). CF(0) has three main subunits: a, b and c.

The protein localises to the cell membrane. In terms of biological role, produces ATP from ADP in the presence of a proton gradient across the membrane. The gamma chain is believed to be important in regulating ATPase activity and the flow of protons through the CF(0) complex. This Streptococcus sanguinis protein is ATP synthase gamma chain.